The primary structure comprises 235 residues: Motile sperm domain-containing protein 3 (235 aa).

2 disordered regions span residues M1–P25 and E143–H171. The MSP domain maps to P33–Q145. Over residues D149–T164 the composition is skewed to pro residues. 2 helical membrane-spanning segments follow: residues S180 to P200 and V213 to L233.

The protein resides in the membrane. The sequence is that of Motile sperm domain-containing protein 3 (MOSPD3) from Homo sapiens (Human).